A 96-amino-acid polypeptide reads, in one-letter code: Protein Vpr (96 aa).

Positions 1–42 are homooligomerization; sequence MEQAPEDQGPQREPYNEWTLELLEELKSEAVRHFPRLWLHSL. Phosphoserine; by host occurs at positions 79, 94, and 96.

The protein belongs to the HIV-1 VPR protein family. As to quaternary structure, homooligomer, may form homodimer. Interacts with p6-gag region of the Pr55 Gag precursor protein through a (Leu-X-X)4 motif near the C-terminus of the P6gag protein. Interacts with host UNG. May interact with host RAD23A/HHR23A. Interacts with host VPRBP/DCAF1, leading to hijack the CUL4A-RBX1-DDB1-DCAF1/VPRBP complex, mediating ubiquitination of host proteins such as TERT and ZGPAT and arrest of the cell cycle in G2 phase. Post-translationally, phosphorylated on several residues by host. These phosphorylations regulate VPR activity for the nuclear import of the HIV-1 pre-integration complex.

Its subcellular location is the virion. The protein localises to the host nucleus. It is found in the host extracellular space. Functionally, during virus replication, may deplete host UNG protein, and incude G2-M cell cycle arrest. Acts by targeting specific host proteins for degradation by the 26S proteasome, through association with the cellular CUL4A-DDB1 E3 ligase complex by direct interaction with host VPRPB/DCAF-1. Cell cycle arrest reportedly occurs within hours of infection and is not blocked by antiviral agents, suggesting that it is initiated by the VPR carried into the virion. Additionally, VPR induces apoptosis in a cell cycle dependent manner suggesting that these two effects are mechanistically linked. Detected in the serum and cerebrospinal fluid of AIDS patient, VPR may also induce cell death to bystander cells. In terms of biological role, during virus entry, plays a role in the transport of the viral pre-integration (PIC) complex to the host nucleus. This function is crucial for viral infection of non-dividing macrophages. May act directly at the nuclear pore complex, by binding nucleoporins phenylalanine-glycine (FG)-repeat regions. The protein is Protein Vpr of Human immunodeficiency virus type 1 group M subtype B (isolate RF/HAT3) (HIV-1).